We begin with the raw amino-acid sequence, 149 residues long: MFNKILVVCVGNVCRSPTAERLLKRFHPSLTVASAGLGALVGKGADPAAASVASAHDLSLENHCARQISARLCREYDLILTMEKRHIAALCDIAPEMRSKVMLFGHWDSEREIPDPYRKSRDAFEAVYTLLERSARQWAQALNAEQGKP.

The Nucleophile role is filled by Cys-9. The active site involves Arg-15. The active-site Proton donor is the Asp-115.

This sequence belongs to the low molecular weight phosphotyrosine protein phosphatase family.

The enzyme catalyses O-phospho-L-tyrosyl-[protein] + H2O = L-tyrosyl-[protein] + phosphate. It participates in glycan metabolism; exopolysaccharide biosynthesis. In terms of biological role, dephosphorylates Wzc. Required for the extracellular polysaccharide colanic acid synthesis. Probably involved in the export of colanic acid from the cell to medium. Involved in protection of cells against contact-dependent growth inhibition (CDI). This Salmonella typhi protein is Low molecular weight protein-tyrosine-phosphatase Wzb (wzb).